The chain runs to 189 residues: Protein GrpE (189 aa).

Residues methionine 1–aspartate 20 are compositionally biased toward polar residues. Positions methionine 1–methionine 29 are disordered.

Belongs to the GrpE family. As to quaternary structure, homodimer.

The protein localises to the cytoplasm. In terms of biological role, participates actively in the response to hyperosmotic and heat shock by preventing the aggregation of stress-denatured proteins, in association with DnaK and GrpE. It is the nucleotide exchange factor for DnaK and may function as a thermosensor. Unfolded proteins bind initially to DnaJ; upon interaction with the DnaJ-bound protein, DnaK hydrolyzes its bound ATP, resulting in the formation of a stable complex. GrpE releases ADP from DnaK; ATP binding to DnaK triggers the release of the substrate protein, thus completing the reaction cycle. Several rounds of ATP-dependent interactions between DnaJ, DnaK and GrpE are required for fully efficient folding. This is Protein GrpE from Paracidovorax citrulli (strain AAC00-1) (Acidovorax citrulli).